The following is a 213-amino-acid chain: Kynurenine formamidase (213 aa).

Tryptophan 20 serves as a coordination point for substrate. Zn(2+) is bound by residues histidine 50, histidine 54, and aspartate 56. Catalysis depends on histidine 60, which acts as the Proton donor/acceptor. The Zn(2+) site is built by histidine 161 and glutamate 173.

This sequence belongs to the Cyclase 1 superfamily. KynB family. Homodimer. Requires Zn(2+) as cofactor.

It catalyses the reaction N-formyl-L-kynurenine + H2O = L-kynurenine + formate + H(+). It participates in amino-acid degradation; L-tryptophan degradation via kynurenine pathway; L-kynurenine from L-tryptophan: step 2/2. Its function is as follows. Catalyzes the hydrolysis of N-formyl-L-kynurenine to L-kynurenine, the second step in the kynurenine pathway of tryptophan degradation. This is Kynurenine formamidase from Pseudomonas aeruginosa (strain ATCC 15692 / DSM 22644 / CIP 104116 / JCM 14847 / LMG 12228 / 1C / PRS 101 / PAO1).